The primary structure comprises 119 residues: NADH dehydrogenase [ubiquinone] 1 subunit C2 (119 aa).

Residues 56 to 75 (GLHRQLLYITAFFFAGYYLV) traverse the membrane as a helical segment.

The protein belongs to the complex I NDUFC2 subunit family. In terms of assembly, complex I is composed of 45 different subunits. Interacts with TMEM242.

The protein resides in the mitochondrion inner membrane. Accessory subunit of the mitochondrial membrane respiratory chain NADH dehydrogenase (Complex I), that is believed not to be involved in catalysis but required for the complex assembly. Complex I functions in the transfer of electrons from NADH to the respiratory chain. The immediate electron acceptor for the enzyme is believed to be ubiquinone. This chain is NADH dehydrogenase [ubiquinone] 1 subunit C2, found in Pongo pygmaeus (Bornean orangutan).